The primary structure comprises 652 residues: DNA ligase (652 aa).

Residues 29 to 33, 78 to 79, and E107 each bind NAD(+); these read DSDYD and SL. K109 functions as the N6-AMP-lysine intermediate in the catalytic mechanism. Residues R130, E164, K278, and K302 each coordinate NAD(+). Residues C395, C398, C413, and C418 each contribute to the Zn(2+) site. The BRCT domain maps to 577–652; the sequence is NSDAALFGLT…IEDEDWLRKF (76 aa).

This sequence belongs to the NAD-dependent DNA ligase family. LigA subfamily. It depends on Mg(2+) as a cofactor. Requires Mn(2+) as cofactor.

It catalyses the reaction NAD(+) + (deoxyribonucleotide)n-3'-hydroxyl + 5'-phospho-(deoxyribonucleotide)m = (deoxyribonucleotide)n+m + AMP + beta-nicotinamide D-nucleotide.. DNA ligase that catalyzes the formation of phosphodiester linkages between 5'-phosphoryl and 3'-hydroxyl groups in double-stranded DNA using NAD as a coenzyme and as the energy source for the reaction. It is essential for DNA replication and repair of damaged DNA. The protein is DNA ligase of Streptococcus pyogenes serotype M6 (strain ATCC BAA-946 / MGAS10394).